The chain runs to 564 residues: Formate--tetrahydrofolate ligase (564 aa).

Position 69-76 (69-76 (TPAGEGKS)) interacts with ATP.

This sequence belongs to the formate--tetrahydrofolate ligase family.

The enzyme catalyses (6S)-5,6,7,8-tetrahydrofolate + formate + ATP = (6R)-10-formyltetrahydrofolate + ADP + phosphate. The protein operates within one-carbon metabolism; tetrahydrofolate interconversion. This Renibacterium salmoninarum (strain ATCC 33209 / DSM 20767 / JCM 11484 / NBRC 15589 / NCIMB 2235) protein is Formate--tetrahydrofolate ligase.